The chain runs to 340 residues: Fructoselysine 6-phosphate deglycase (340 aa).

SIS domains lie at 35–169 (IVEE…RLAP) and 201–331 (LGEL…PDER).

In terms of assembly, homododecamer.

It carries out the reaction N(6)-(6-phospho-D-fructosyl)-L-lysine + H2O = D-glucose 6-phosphate + L-lysine. The protein operates within carbohydrate metabolism; fructoselysine degradation; D-glucose 6-phosphate and lysine from fructoselysine: step 2/2. Catalyzes the reversible conversion of fructoselysine 6-phosphate to glucose 6-phosphate and lysine. Functions in a fructoselysine degradation pathway that allows E.coli to grow on fructoselysine or psicoselysine. The sequence is that of Fructoselysine 6-phosphate deglycase (frlB) from Escherichia coli O157:H7.